A 342-amino-acid chain; its full sequence is Nicotinate-nucleotide--dimethylbenzimidazole phosphoribosyltransferase (342 aa).

Residue glutamate 311 is the Proton acceptor of the active site.

It belongs to the CobT family.

The catalysed reaction is 5,6-dimethylbenzimidazole + nicotinate beta-D-ribonucleotide = alpha-ribazole 5'-phosphate + nicotinate + H(+). The protein operates within nucleoside biosynthesis; alpha-ribazole biosynthesis; alpha-ribazole from 5,6-dimethylbenzimidazole: step 1/2. Its function is as follows. Catalyzes the synthesis of alpha-ribazole-5'-phosphate from nicotinate mononucleotide (NAMN) and 5,6-dimethylbenzimidazole (DMB). The polypeptide is Nicotinate-nucleotide--dimethylbenzimidazole phosphoribosyltransferase (Shewanella sediminis (strain HAW-EB3)).